We begin with the raw amino-acid sequence, 379 residues long: Omega-3 fatty acid desaturase, endoplasmic reticulum (379 aa).

A helical transmembrane segment spans residues 52-72 (LSYVVRDVIFVATLIGIAIHL). Residues 97–101 (HDCGH) carry the Histidine box-1 motif. A Histidine box-2 motif is present at residues 133-137 (HKTHH). Helical transmembrane passes span 213–233 (TLCW…FGSL) and 236–256 (FKIY…VTYL). Positions 300 to 304 (HVIHH) match the Histidine box-3 motif.

The protein belongs to the fatty acid desaturase type 1 family.

It localises to the endoplasmic reticulum membrane. Its pathway is lipid metabolism; polyunsaturated fatty acid biosynthesis. Its function is as follows. ER (microsomal) omega-3 fatty acid desaturase introduces the third double bond in the biosynthesis of 18:3 fatty acids, important constituents of plant membranes. It is thought to use cytochrome b5 as an electron donor and to act on fatty acids esterified to phosphatidylcholine and, possibly, other phospholipids. The chain is Omega-3 fatty acid desaturase, endoplasmic reticulum (FAD3) from Nicotiana tabacum (Common tobacco).